Reading from the N-terminus, the 130-residue chain is Small ribosomal subunit protein uS11c (130 aa).

This sequence belongs to the universal ribosomal protein uS11 family. As to quaternary structure, part of the 30S ribosomal subunit.

It is found in the plastid. This is Small ribosomal subunit protein uS11c from Aneura mirabilis (Parasitic liverwort).